The following is a 343-amino-acid chain: MAKLKVGINGFGRIGRLVLRAGINNPNIEFVGINDLVPPDNLAYLLKYDSTHGKLRSQVEAKDDGIVIDGHFIPCVSVRNPAELPWGKLGADYVVESTGLFTDSEGASKHLQAGAKRVIISAPTKDPDRVRTLLVGVNHDLFDPSKDVIVSNASCTTNCLAPIAKVINDNFGLTEGLMTTVHAMTATQPTVDGPSKKDWRGGRGAAQNIIPSSTGAAKAVALVLPELKGKLTGMAFRVPTPDVSVVDLTFKTAKATSYKEICAAMKQASEGSLAGILGYTDEEVVSTDFQGDTHSSIFDAGAGIELNSNFFKVVAWYDNEWGYSNRVVDLMLSMIQKEQLAAV.

Residues 13-14 (RI), aspartate 35, arginine 79, and serine 121 contribute to the NAD(+) site. D-glyceraldehyde 3-phosphate-binding positions include 154–156 (SCT), threonine 185, 214–215 (TG), and arginine 237. The Nucleophile role is filled by cysteine 155. Asparagine 319 serves as a coordination point for NAD(+).

It belongs to the glyceraldehyde-3-phosphate dehydrogenase family. Homotetramer.

The protein localises to the cytoplasm. The catalysed reaction is D-glyceraldehyde 3-phosphate + phosphate + NAD(+) = (2R)-3-phospho-glyceroyl phosphate + NADH + H(+). The protein operates within carbohydrate degradation; glycolysis; pyruvate from D-glyceraldehyde 3-phosphate: step 1/5. Its function is as follows. Catalyzes the oxidative phosphorylation of glyceraldehyde 3-phosphate (G3P) to 1,3-bisphosphoglycerate (BPG) using the cofactor NAD. The first reaction step involves the formation of a hemiacetal intermediate between G3P and a cysteine residue, and this hemiacetal intermediate is then oxidized to a thioester, with concomitant reduction of NAD to NADH. The reduced NADH is then exchanged with the second NAD, and the thioester is attacked by a nucleophilic inorganic phosphate to produce BPG. This chain is Glyceraldehyde-3-phosphate dehydrogenase 1 (gap1), found in Trichormus variabilis (strain ATCC 29413 / PCC 7937) (Anabaena variabilis).